A 334-amino-acid chain; its full sequence is MSTFYQKPFLKLLDFTASELTALLQLAAKLKADKKNGKEEQKLVGKNIALIFEKDSTRTRCSFEVAAYDQGARVTYLGSSGSQIGHKESIKDTARVLGRMFDGIQYRGYGQEIVETLAEYSGVPVWNGLTDEYHPTQLLADLLTMQEHLPGKAFNEMTLVYAGDARNNMGNSMLEAAALTGLDLRLVAPKACWPQAALVAECSAMAKKNGGAITLTEDIASGVKGADFIYTDVWVSMGEPKEKWAERIALLRDYQVNSQMMALTGNPQVKFLHCLPAFHDDETTLGKKMAEEYGLHGGMEVTDEVFESAASIVFDEAENRMHTIKAVMVATLSK.

Residues 56–59 (STRT), Q83, R107, and 134–137 (HPTQ) each bind carbamoyl phosphate. L-ornithine-binding positions include N168, D232, and 236-237 (SM). Carbamoyl phosphate contacts are provided by residues 274–275 (CL) and R320.

Belongs to the aspartate/ornithine carbamoyltransferase superfamily. OTCase family. In terms of assembly, homotrimer.

Its subcellular location is the cytoplasm. The enzyme catalyses carbamoyl phosphate + L-ornithine = L-citrulline + phosphate + H(+). It functions in the pathway amino-acid biosynthesis; L-arginine biosynthesis; L-arginine from L-ornithine and carbamoyl phosphate: step 1/3. Functionally, reversibly catalyzes the transfer of the carbamoyl group from carbamoyl phosphate (CP) to the N(epsilon) atom of ornithine (ORN) to produce L-citrulline. The chain is Ornithine carbamoyltransferase (argI) from Salmonella typhimurium (strain LT2 / SGSC1412 / ATCC 700720).